Consider the following 233-residue polypeptide: UPF0280 protein AF_0649 (233 aa).

This sequence belongs to the UPF0280 family.

The polypeptide is UPF0280 protein AF_0649 (Archaeoglobus fulgidus (strain ATCC 49558 / DSM 4304 / JCM 9628 / NBRC 100126 / VC-16)).